A 405-amino-acid chain; its full sequence is Cytoplasmic polyadenylated homeobox-like protein (405 aa).

Disordered regions lie at residues 1-33 (MNLD…KHRH) and 340-363 (PWDL…QNNG). Residues 13 to 23 (EEDHHNEERQT) are compositionally biased toward basic and acidic residues. Residues 24 to 33 (KNKRKTKHRH) show a composition bias toward basic residues. The segment at residues 28 to 87 (KTKHRHKFSEELLQELKEIFGENCYPDYTTRKTLAIKFDCPVNVIDNWFQNKRARLPPAE) is a DNA-binding region (homeobox). A compositionally biased stretch (low complexity) spans 346-360 (QWSSAQSQLQSQLPQ).

The protein resides in the nucleus. Its function is as follows. Transcription factor that acts as activator. The chain is Cytoplasmic polyadenylated homeobox-like protein from Homo sapiens (Human).